The primary structure comprises 248 residues: 2,3-bisphosphoglycerate-dependent phosphoglycerate mutase (248 aa).

Residues 8–15 (RHGESEWN), 21–22 (TG), arginine 60, 87–90 (ERHY), lysine 98, 114–115 (RR), and 183–184 (GN) each bind substrate. Histidine 9 (tele-phosphohistidine intermediate) is an active-site residue. Glutamate 87 serves as the catalytic Proton donor/acceptor.

This sequence belongs to the phosphoglycerate mutase family. BPG-dependent PGAM subfamily.

The enzyme catalyses (2R)-2-phosphoglycerate = (2R)-3-phosphoglycerate. Its pathway is carbohydrate degradation; glycolysis; pyruvate from D-glyceraldehyde 3-phosphate: step 3/5. Its function is as follows. Catalyzes the interconversion of 2-phosphoglycerate and 3-phosphoglycerate. In Borreliella burgdorferi (strain ATCC 35210 / DSM 4680 / CIP 102532 / B31) (Borrelia burgdorferi), this protein is 2,3-bisphosphoglycerate-dependent phosphoglycerate mutase.